The following is an 86-amino-acid chain: Large ribosomal subunit protein bL27 (86 aa).

This sequence belongs to the bacterial ribosomal protein bL27 family.

The chain is Large ribosomal subunit protein bL27 from Xanthomonas campestris pv. campestris (strain 8004).